Here is a 349-residue protein sequence, read N- to C-terminus: UDP-N-acetylenolpyruvoylglucosamine reductase (349 aa).

The FAD-binding PCMH-type domain occupies 26-197 (FDARARVAAR…VAVTFRLPKA (172 aa)). Residue arginine 173 is part of the active site. Residue serine 249 is the Proton donor of the active site. Glutamate 345 is an active-site residue.

It belongs to the MurB family. The cofactor is FAD.

It is found in the cytoplasm. The enzyme catalyses UDP-N-acetyl-alpha-D-muramate + NADP(+) = UDP-N-acetyl-3-O-(1-carboxyvinyl)-alpha-D-glucosamine + NADPH + H(+). The protein operates within cell wall biogenesis; peptidoglycan biosynthesis. Its function is as follows. Cell wall formation. The polypeptide is UDP-N-acetylenolpyruvoylglucosamine reductase (Burkholderia pseudomallei (strain 1710b)).